A 465-amino-acid chain; its full sequence is Catalase cnsD (465 aa).

The active site involves histidine 39. Position 331 (tyrosine 331) interacts with heme.

The protein belongs to the catalase family. Heme serves as cofactor.

The protein operates within alkaloid biosynthesis. Its function is as follows. Catalase; part of the gene cluster that mediates the biosynthesis of communesins, a prominent class of indole alkaloids with great potential as pharmaceuticals. Communesins are biosynthesized by the coupling of tryptamine and aurantioclavine, two building blocks derived from L-tryptophan. The L-tryptophan decarboxylase cnsB converts L-tryptophan to tryptamine, whereas the tryptophan dimethylallyltransferase cnsF converts L-tryptophan to 4-dimethylallyl tryptophan which is further transformed to aurantioclavine by the aurantioclavine synthase cnsA, probably aided by the catalase cnsD. The cytochrome P450 monooxygenase cnsC catalyzes the heterodimeric coupling between the two different indole moieties, tryptamine and aurantioclavine, to construct vicinal quaternary stereocenters and yield the heptacyclic communesin scaffold. The O-methyltransferase cnsE then methylates the communesin scaffold to produce communesin K, the simplest characterized communesin that contains the heptacyclic core. The dioxygenase cnsJ converts communesin K into communesin I. Acylation to introduce the hexadienyl group at position N16 of communesin I by the acyltransferase cnsK leads to the production of communesin B. The hexadienyl group is produced by the highly reducing polyketide synthase cnsI, before being hydrolytically removed from cnsI by the serine hydrolase cnsH, converted into hexadienyl-CoA by the CoA ligase cnsG, and then transferred to communesin I by cnsK. Surprisingly, cnsK may also be a promiscuous acyltransferase that can tolerate a range of acyl groups, including acetyl-, propionyl-, and butyryl-CoA, which lead to communesins A, G and H respectively. The roles of the alpha-ketoglutarate-dependent dioxygenases cnsM and cnsP have still to be determined. This Penicillium expansum (Blue mold rot fungus) protein is Catalase cnsD.